We begin with the raw amino-acid sequence, 418 residues long: Ankyrin repeat domain-containing protein 61 (418 aa).

8 ANK repeats span residues 27–57 (ALHS…NQPL), 74–103 (QPIF…DPEV), 131–160 (TRIQ…QVNA), 166–195 (NKHS…QVNA), 199–228 (SSMT…NVNC), 233–272 (TGNT…QVNA), 276–305 (EGQT…NVNI), and 309–342 (NGES…PLRL).

This chain is Ankyrin repeat domain-containing protein 61 (Ankrd61), found in Rattus norvegicus (Rat).